The following is a 407-amino-acid chain: MMNRKQTVGVRVGSVRIGGGAPIVVQSMTNTDTADVAGTVRQVIDLARAGSELVRITVNNEEAAEAVPRIREELDRQGCNVPLVGDFHFNGHKLLDKYPACAEALGKFRINPGNVGRGSKRDPQFAQMIEFACRYDKPVRIGVNWGSLDQSVLARLLDENARLAEPRPLPEVMREAVITSALESAEKAQGLGLPKDRIVLSCKMSGVQELISVYEALSSRCDHALHLGLTEAGMGSKGIVASTAALSVLLQQGIGDTIRISLTPEPGADRSLEVIVAQEILQTMGLRSFTPMVISCPGCGRTTSDYFQKLAQQIQTHLRHKMPEWRRRYRGVEDMHVAVMGCVVNGPGESKNANIGISLPGTGEQPVAPVFEDGVKTVTLKGDRIAEEFQELVERYIETHYGSRAEA.

[4Fe-4S] cluster contacts are provided by C296, C299, C342, and E349.

It belongs to the IspG family. Requires [4Fe-4S] cluster as cofactor.

It catalyses the reaction (2E)-4-hydroxy-3-methylbut-2-enyl diphosphate + oxidized [flavodoxin] + H2O + 2 H(+) = 2-C-methyl-D-erythritol 2,4-cyclic diphosphate + reduced [flavodoxin]. The protein operates within isoprenoid biosynthesis; isopentenyl diphosphate biosynthesis via DXP pathway; isopentenyl diphosphate from 1-deoxy-D-xylulose 5-phosphate: step 5/6. In terms of biological role, converts 2C-methyl-D-erythritol 2,4-cyclodiphosphate (ME-2,4cPP) into 1-hydroxy-2-methyl-2-(E)-butenyl 4-diphosphate. The chain is 4-hydroxy-3-methylbut-2-en-1-yl diphosphate synthase (flavodoxin) from Methylococcus capsulatus (strain ATCC 33009 / NCIMB 11132 / Bath).